The chain runs to 129 residues: UPF0102 protein Mrad2831_2938 (129 aa).

Belongs to the UPF0102 family.

The sequence is that of UPF0102 protein Mrad2831_2938 from Methylobacterium radiotolerans (strain ATCC 27329 / DSM 1819 / JCM 2831 / NBRC 15690 / NCIMB 10815 / 0-1).